Consider the following 64-residue polypeptide: Conotoxin VnMLCL-033 (64 aa).

Positions 1–19 (MLCLPVFIILLLLASPAAP) are cleaved as a signal peptide. Positions 20–43 (NPLQTRIQSNLIRAGPEDANIKTD) are excised as a propeptide. Ile63 carries the post-translational modification Isoleucine amide.

Belongs to the conotoxin T superfamily. In terms of tissue distribution, expressed by the venom duct.

Its subcellular location is the secreted. The protein is Conotoxin VnMLCL-033 of Conus ventricosus (Mediterranean cone).